Reading from the N-terminus, the 197-residue chain is Probable nicotinate-nucleotide adenylyltransferase (197 aa).

It belongs to the NadD family.

It catalyses the reaction nicotinate beta-D-ribonucleotide + ATP + H(+) = deamido-NAD(+) + diphosphate. The protein operates within cofactor biosynthesis; NAD(+) biosynthesis; deamido-NAD(+) from nicotinate D-ribonucleotide: step 1/1. Catalyzes the reversible adenylation of nicotinate mononucleotide (NaMN) to nicotinic acid adenine dinucleotide (NaAD). The polypeptide is Probable nicotinate-nucleotide adenylyltransferase (Thermosipho melanesiensis (strain DSM 12029 / CIP 104789 / BI429)).